The following is a 937-amino-acid chain: Protein translocase subunit SecA (937 aa).

ATP is bound by residues glutamine 90, 108–112 (GEGKT), and aspartate 509.

The protein belongs to the SecA family. In terms of assembly, monomer and homodimer. Part of the essential Sec protein translocation apparatus which comprises SecA, SecYEG and auxiliary proteins SecDF. Other proteins may also be involved.

The protein resides in the cell inner membrane. The protein localises to the cellular thylakoid membrane. It is found in the cytoplasm. It carries out the reaction ATP + H2O + cellular proteinSide 1 = ADP + phosphate + cellular proteinSide 2.. Part of the Sec protein translocase complex. Interacts with the SecYEG preprotein conducting channel. Has a central role in coupling the hydrolysis of ATP to the transfer of proteins into and across the cell membrane, serving as an ATP-driven molecular motor driving the stepwise translocation of polypeptide chains across the membrane. In terms of biological role, probably participates in protein translocation into and across both the cytoplasmic and thylakoid membranes in cyanobacterial cells. The polypeptide is Protein translocase subunit SecA (Synechococcus sp. (strain CC9902)).